We begin with the raw amino-acid sequence, 116 residues long: Large ribosomal subunit protein bL20 (116 aa).

It belongs to the bacterial ribosomal protein bL20 family.

Its function is as follows. Binds directly to 23S ribosomal RNA and is necessary for the in vitro assembly process of the 50S ribosomal subunit. It is not involved in the protein synthesizing functions of that subunit. The chain is Large ribosomal subunit protein bL20 from Helicobacter pylori (strain G27).